A 93-amino-acid polypeptide reads, in one-letter code: Small ribosomal subunit protein uS19 (93 aa).

This sequence belongs to the universal ribosomal protein uS19 family.

Its function is as follows. Protein S19 forms a complex with S13 that binds strongly to the 16S ribosomal RNA. In Ruminiclostridium cellulolyticum (strain ATCC 35319 / DSM 5812 / JCM 6584 / H10) (Clostridium cellulolyticum), this protein is Small ribosomal subunit protein uS19.